Here is a 367-residue protein sequence, read N- to C-terminus: Mitochondrial GTPase 1 (367 aa).

A CP-type G domain is found at 42–228; the sequence is LKTFEKLLPQ…LIDTPGIGVP (187 aa). GTP-binding positions include 89-92, 160-165, and Gly224; these read TRKD and NVGKST.

The protein belongs to the TRAFAC class YlqF/YawG GTPase family. MTG1 subfamily.

The protein resides in the mitochondrion inner membrane. Its function is as follows. Mitochondrial GTPase involved in assembly of the large ribosomal subunit. Plays a role in expression of the mitochondrial translational machinery. This is Mitochondrial GTPase 1 (MTG1) from Saccharomyces cerevisiae (strain ATCC 204508 / S288c) (Baker's yeast).